The chain runs to 791 residues: Lon protease (791 aa).

Residues 3–209 enclose the Lon N-terminal domain; it reads KPILISRAIV…TILHLLFDQL (207 aa). ATP is bound at residue 365–372; that stretch reads GPPGVGKT. The 186-residue stretch at 605–790 folds into the Lon proteolytic domain; that stretch reads TTIPGIVNGM…DEVYNIVFGE (186 aa). Residues Ser696 and Lys739 contribute to the active site.

Belongs to the peptidase S16 family. In terms of assembly, homohexamer. Organized in a ring with a central cavity.

The protein resides in the cytoplasm. The catalysed reaction is Hydrolysis of proteins in presence of ATP.. Functionally, ATP-dependent serine protease that mediates the selective degradation of mutant and abnormal proteins as well as certain short-lived regulatory proteins. Required for cellular homeostasis and for survival from DNA damage and developmental changes induced by stress. Degrades polypeptides processively to yield small peptide fragments that are 5 to 10 amino acids long. Binds to DNA in a double-stranded, site-specific manner. This Ureaplasma parvum serovar 3 (strain ATCC 27815 / 27 / NCTC 11736) protein is Lon protease.